The chain runs to 118 residues: Large ribosomal subunit protein bL19 (118 aa).

It belongs to the bacterial ribosomal protein bL19 family.

In terms of biological role, this protein is located at the 30S-50S ribosomal subunit interface and may play a role in the structure and function of the aminoacyl-tRNA binding site. This Lactiplantibacillus plantarum (strain ATCC BAA-793 / NCIMB 8826 / WCFS1) (Lactobacillus plantarum) protein is Large ribosomal subunit protein bL19.